A 429-amino-acid polypeptide reads, in one-letter code: Phosphoribosylamine--glycine ligase (429 aa).

One can recognise an ATP-grasp domain in the interval 109 to 316 (KDFLARHQIP…LVDLCLAACD (208 aa)). 135–196 (LREKGAPIVI…EEFLDGEEAS (62 aa)) is a binding site for ATP. Mg(2+)-binding residues include Glu-286 and Asn-288.

This sequence belongs to the GARS family. Monomer. The cofactor is Mg(2+). Mn(2+) serves as cofactor.

It catalyses the reaction 5-phospho-beta-D-ribosylamine + glycine + ATP = N(1)-(5-phospho-beta-D-ribosyl)glycinamide + ADP + phosphate + H(+). The protein operates within purine metabolism; IMP biosynthesis via de novo pathway; N(1)-(5-phospho-D-ribosyl)glycinamide from 5-phospho-alpha-D-ribose 1-diphosphate: step 2/2. The polypeptide is Phosphoribosylamine--glycine ligase (Salmonella typhi).